A 167-amino-acid chain; its full sequence is Endoribonuclease YbeY (167 aa).

Zn(2+) is bound by residues histidine 132, histidine 136, and histidine 142.

The protein belongs to the endoribonuclease YbeY family. Zn(2+) is required as a cofactor.

Its subcellular location is the cytoplasm. Functionally, single strand-specific metallo-endoribonuclease involved in late-stage 70S ribosome quality control and in maturation of the 3' terminus of the 16S rRNA. The chain is Endoribonuclease YbeY from Clostridium tetani (strain Massachusetts / E88).